Reading from the N-terminus, the 138-residue chain is Ribulose bisphosphate carboxylase small subunit (138 aa).

Belongs to the RuBisCO small chain family. As to quaternary structure, heterohexadecamer of 8 large and 8 small subunits.

It is found in the plastid. The protein resides in the chloroplast. Its function is as follows. RuBisCO catalyzes two reactions: the carboxylation of D-ribulose 1,5-bisphosphate, the primary event in carbon dioxide fixation, as well as the oxidative fragmentation of the pentose substrate in the photorespiration process. Both reactions occur simultaneously and in competition at the same active site. Although the small subunit is not catalytic it is essential for maximal activity. This chain is Ribulose bisphosphate carboxylase small subunit, found in Pyropia haitanensis (Red seaweed).